We begin with the raw amino-acid sequence, 274 residues long: Large ribosomal subunit protein uL2 (274 aa).

2 disordered regions span residues 28–54 (APYAPLLEKNSKSGGRNNNGRITTRHI) and 223–265 (VAMN…KRTD). A compositionally biased stretch (low complexity) spans 39–48 (KSGGRNNNGR).

Belongs to the universal ribosomal protein uL2 family. As to quaternary structure, part of the 50S ribosomal subunit. Forms a bridge to the 30S subunit in the 70S ribosome.

One of the primary rRNA binding proteins. Required for association of the 30S and 50S subunits to form the 70S ribosome, for tRNA binding and peptide bond formation. It has been suggested to have peptidyltransferase activity; this is somewhat controversial. Makes several contacts with the 16S rRNA in the 70S ribosome. This Alteromonas mediterranea (strain DSM 17117 / CIP 110805 / LMG 28347 / Deep ecotype) protein is Large ribosomal subunit protein uL2.